Here is a 330-residue protein sequence, read N- to C-terminus: 5'-AMP-activated protein kinase subunit gamma-1 (330 aa).

Positions 1–24 are disordered; the sequence is MEAVPSSDSYPAVENEHLQETPES. CBS domains are found at residues 43-103, 125-187, and 198-260; these read PTSS…KSAL, SFKP…PKPE, and IGTY…NLDV. ADP contacts are provided by residues arginine 70, 85-90, valine 130, 151-152, and lysine 170; these read MLTITD and HR. AMP contacts are provided by residues arginine 70, 85 to 90, valine 130, histidine 151, 151 to 152, lysine 170, threonine 200, alanine 205, 226 to 227, and 242 to 245; these read MLTITD, HR, SA, and SKFD. ATP-binding positions include arginine 70, 85 to 90, valine 130, 151 to 152, arginine 152, and lysine 170; these read MLTITD and HR. The AMPK pseudosubstrate signature appears at 138–159; it reads LFDAVSSLIRNKIHRLPVIDPE. An ADP-binding site is contributed by 242 to 245; sequence SKFD. Residue 242–245 participates in ATP binding; sequence SKFD. Serine 261 is modified (phosphoserine; by ULK1). A Phosphothreonine; by ULK1 modification is found at threonine 263. Arginine 269 is a binding site for ADP. Arginine 269 is a binding site for AMP. Residue arginine 269 coordinates ATP. At serine 270 the chain carries Phosphoserine; by ULK1. Residues 272–329 enclose the CBS 4 domain; it reads YFEGVLKCYLHETLETIINRLVEAEVHRLVVVDENDVVKGIVSLSDILQALVLTGGEK. ADP-binding positions include leucine 277 and 298 to 299; that span reads HR. AMP-binding positions include leucine 277, histidine 298, 298 to 299, and 314 to 317; these read HR and SLSD. ATP is bound by residues leucine 277 and 298–299; that span reads HR.

This sequence belongs to the 5'-AMP-activated protein kinase gamma subunit family. As to quaternary structure, AMPK is a heterotrimer of an alpha catalytic subunit (PRKAA1 or PRKAA2), a beta (PRKAB1 or PRKAB2) and a gamma non-catalytic subunits (PRKAG1, PRKAG2 or PRKAG3). Interacts with FNIP1 and FNIP2. In terms of processing, phosphorylated by ULK1 and ULK2; leading to negatively regulate AMPK activity and suggesting the existence of a regulatory feedback loop between ULK1, ULK2 and AMPK. Glycosylated; O-GlcNAcylated by OGT, promoting the AMP-activated protein kinase (AMPK) activity.

AMP/ATP-binding subunit of AMP-activated protein kinase (AMPK), an energy sensor protein kinase that plays a key role in regulating cellular energy metabolism. In response to reduction of intracellular ATP levels, AMPK activates energy-producing pathways and inhibits energy-consuming processes: inhibits protein, carbohydrate and lipid biosynthesis, as well as cell growth and proliferation. AMPK acts via direct phosphorylation of metabolic enzymes, and by longer-term effects via phosphorylation of transcription regulators. Also acts as a regulator of cellular polarity by remodeling the actin cytoskeleton; probably by indirectly activating myosin. Gamma non-catalytic subunit mediates binding to AMP, ADP and ATP, leading to activate or inhibit AMPK: AMP-binding results in allosteric activation of alpha catalytic subunit (PRKAA1 or PRKAA2) both by inducing phosphorylation and preventing dephosphorylation of catalytic subunits. ADP also stimulates phosphorylation, without stimulating already phosphorylated catalytic subunit. ATP promotes dephosphorylation of catalytic subunit, rendering the AMPK enzyme inactive. The chain is 5'-AMP-activated protein kinase subunit gamma-1 (PRKAG1) from Bos taurus (Bovine).